A 90-amino-acid chain; its full sequence is uncharacterized protein (90 aa).

Residues 13–34 form a disordered region; sequence APEGMGPHHAASSSHHSAQHHH. Residues 52–72 traverse the membrane as a helical segment; it reads YKMWFLYALILALIFGVFMWW.

It localises to the host membrane. This is an uncharacterized protein from Invertebrate iridescent virus 3 (IIV-3).